We begin with the raw amino-acid sequence, 483 residues long: Glutamyl-tRNA(Gln) amidotransferase subunit A (483 aa).

Active-site charge relay system residues include K76 and S151. Residue S175 is the Acyl-ester intermediate of the active site.

Belongs to the amidase family. GatA subfamily. Heterotrimer of A, B and C subunits.

The catalysed reaction is L-glutamyl-tRNA(Gln) + L-glutamine + ATP + H2O = L-glutaminyl-tRNA(Gln) + L-glutamate + ADP + phosphate + H(+). Allows the formation of correctly charged Gln-tRNA(Gln) through the transamidation of misacylated Glu-tRNA(Gln) in organisms which lack glutaminyl-tRNA synthetase. The reaction takes place in the presence of glutamine and ATP through an activated gamma-phospho-Glu-tRNA(Gln). This is Glutamyl-tRNA(Gln) amidotransferase subunit A from Nitrosospira multiformis (strain ATCC 25196 / NCIMB 11849 / C 71).